A 207-amino-acid polypeptide reads, in one-letter code: V-type ATP synthase subunit D (207 aa).

This sequence belongs to the V-ATPase D subunit family.

Its function is as follows. Produces ATP from ADP in the presence of a proton gradient across the membrane. The polypeptide is V-type ATP synthase subunit D (Streptococcus gordonii (strain Challis / ATCC 35105 / BCRC 15272 / CH1 / DL1 / V288)).